The following is a 561-amino-acid chain: Oxygen-dependent choline dehydrogenase (561 aa).

7-36 (DYIIVGAGSAGNVLASRLTEDADVTVLLLE) provides a ligand contact to FAD. His-474 serves as the catalytic Proton acceptor.

Belongs to the GMC oxidoreductase family. The cofactor is FAD.

It carries out the reaction choline + A = betaine aldehyde + AH2. It catalyses the reaction betaine aldehyde + NAD(+) + H2O = glycine betaine + NADH + 2 H(+). The protein operates within amine and polyamine biosynthesis; betaine biosynthesis via choline pathway; betaine aldehyde from choline (cytochrome c reductase route): step 1/1. Involved in the biosynthesis of the osmoprotectant glycine betaine. Catalyzes the oxidation of choline to betaine aldehyde and betaine aldehyde to glycine betaine at the same rate. The protein is Oxygen-dependent choline dehydrogenase of Paraburkholderia phytofirmans (strain DSM 17436 / LMG 22146 / PsJN) (Burkholderia phytofirmans).